The following is a 253-amino-acid chain: UPF0280 protein MA_1715 (253 aa).

Belongs to the UPF0280 family.

The polypeptide is UPF0280 protein MA_1715 (Methanosarcina acetivorans (strain ATCC 35395 / DSM 2834 / JCM 12185 / C2A)).